The chain runs to 232 residues: Small ribosomal subunit protein uS3 (232 aa).

The KH type-2 domain occupies 39 to 107 (IRKFLKKELF…DVAINIKEEK (69 aa)). Residues 213 to 232 (QPEPAEEKKGGRRPSRKRGE) form a disordered region. Over residues 222-232 (GGRRPSRKRGE) the composition is skewed to basic residues.

Belongs to the universal ribosomal protein uS3 family. As to quaternary structure, part of the 30S ribosomal subunit. Forms a tight complex with proteins S10 and S14.

Binds the lower part of the 30S subunit head. Binds mRNA in the 70S ribosome, positioning it for translation. The protein is Small ribosomal subunit protein uS3 of Sulfurovum sp. (strain NBC37-1).